The following is a 280-amino-acid chain: tRNA pseudouridine synthase A (280 aa).

Asp-55 (nucleophile) is an active-site residue. Residue Tyr-110 coordinates substrate.

This sequence belongs to the tRNA pseudouridine synthase TruA family.

The catalysed reaction is uridine(38/39/40) in tRNA = pseudouridine(38/39/40) in tRNA. Its function is as follows. Formation of pseudouridine at positions 38, 39 and 40 in the anticodon stem and loop of transfer RNAs. This chain is tRNA pseudouridine synthase A, found in Methanosphaerula palustris (strain ATCC BAA-1556 / DSM 19958 / E1-9c).